We begin with the raw amino-acid sequence, 344 residues long: Arginine N-succinyltransferase (344 aa).

Position 125 (leucine 125) interacts with succinyl-CoA. The active-site Proton donor is the histidine 229.

This sequence belongs to the arginine N-succinyltransferase family.

The catalysed reaction is succinyl-CoA + L-arginine = N(2)-succinyl-L-arginine + CoA + H(+). Its pathway is amino-acid degradation; L-arginine degradation via AST pathway; L-glutamate and succinate from L-arginine: step 1/5. In terms of biological role, catalyzes the transfer of succinyl-CoA to arginine to produce N(2)-succinylarginine. The sequence is that of Arginine N-succinyltransferase from Enterobacter sp. (strain 638).